The sequence spans 57 residues: Protein translocase subunit SecE (57 aa).

The chain crosses the membrane as a helical span at residues 33-53 (GLGILLVGFIGFVIFSIMTFV).

This sequence belongs to the SecE/SEC61-gamma family. As to quaternary structure, component of the Sec protein translocase complex. Heterotrimer consisting of SecY (alpha), SecG (beta) and SecE (gamma) subunits. The heterotrimers can form oligomers, although 1 heterotrimer is thought to be able to translocate proteins. Interacts with the ribosome. May interact with SecDF, and other proteins may be involved.

The protein localises to the cell membrane. Its function is as follows. Essential subunit of the Sec protein translocation channel SecYEG. Clamps together the 2 halves of SecY. May contact the channel plug during translocation. In Natronomonas pharaonis (strain ATCC 35678 / DSM 2160 / CIP 103997 / JCM 8858 / NBRC 14720 / NCIMB 2260 / Gabara) (Halobacterium pharaonis), this protein is Protein translocase subunit SecE.